A 322-amino-acid polypeptide reads, in one-letter code: Transcriptional activator protein Pur-alpha (322 aa).

Positions 1–55 (MADRDSGSEQGGAALGSGGSLGHPGSGSGSGGGGGGGGGGGGSGGGGGGAPGGLQ) are disordered. Alanine 2 carries the N-acetylalanine modification. Residues 9–52 (EQGGAALGSGGSLGHPGSGSGSGGGGGGGGGGGGSGGGGGGAPG) show a composition bias toward gly residues. The PUR repeat I repeat unit spans residues 60-125 (ELASKRVDIQ…DFIEHYAQLG (66 aa)). One copy of the PUR repeat II repeat lies at 142 to 213 (ALKSEFLVRE…KLIDDYGVEE (72 aa)). Serine 182 is subject to Phosphoserine. The stretch at 215–281 (PAELPEGTSL…CKYSEEMKKI (67 aa)) is one PUR repeat III repeat. Low complexity predominate over residues 295 to 314 (LHQQQQQQQEETAAATLLLQ). The segment at 295 to 322 (LHQQQQQQQEETAAATLLLQGEEEGEED) is disordered.

Belongs to the PUR DNA-binding protein family. As to quaternary structure, homodimer, heterodimer with PURB and heterotrimer with PURB and YBX1/Y-box protein 1. Interacts with FMR1; this interaction occurs in association with polyribosome.

It is found in the nucleus. Its function is as follows. This is a probable transcription activator that specifically binds the purine-rich single strand of the PUR element located upstream of the MYC gene. May play a role in the initiation of DNA replication and in recombination. This is Transcriptional activator protein Pur-alpha (PURA) from Homo sapiens (Human).